Consider the following 314-residue polypeptide: Mitochondrial 2-oxoglutarate/malate carrier protein (314 aa).

At Ala2 the chain carries N-acetylalanine. Ser6 carries the phosphoserine modification. 3 Solcar repeats span residues 23–108, 117–208, and 217–306; these read VKFL…LFER, PGFL…SKQF, and DNIL…MNKA. A helical transmembrane segment spans residues 24–42; the sequence is KFLFGGLAGMGATVFVQPL. N6-succinyllysine is present on Lys57. A helical transmembrane segment spans residues 83–101; it reads GLSAGLLRQATYTTTRLGI. Tyr102 carries the phosphotyrosine modification. The next 3 helical transmembrane spans lie at 119 to 140, 183 to 202, and 222 to 240; these read FLLKAVIGMTAGATGAFVGTPA, GCIPTMARAVVVNAAQLASY, and HFCASMISGLVTTAASMPV. The residue at position 256 (Lys256) is an N6-acetyllysine. The chain crosses the membrane as a helical span at residues 281–300; the sequence is GFTPYYARLGPHTVLTFIFL.

This sequence belongs to the mitochondrial carrier (TC 2.A.29) family. In terms of assembly, interacts with SMIM26. Post-translationally, the N-terminus is blocked. As to expression, heart, liver and brain.

The protein localises to the mitochondrion inner membrane. The enzyme catalyses (S)-malate(in) + 2-oxoglutarate(out) = (S)-malate(out) + 2-oxoglutarate(in). It catalyses the reaction malonate(in) + 2-oxoglutarate(out) = malonate(out) + 2-oxoglutarate(in). It carries out the reaction succinate(in) + 2-oxoglutarate(out) = succinate(out) + 2-oxoglutarate(in). The catalysed reaction is maleate(in) + 2-oxoglutarate(out) = maleate(out) + 2-oxoglutarate(in). The enzyme catalyses oxaloacetate(in) + 2-oxoglutarate(out) = oxaloacetate(out) + 2-oxoglutarate(in). In terms of biological role, catalyzes the transport of 2-oxoglutarate (alpha-oxoglutarate) across the inner mitochondrial membrane in an electroneutral exchange for malate. Can also exchange 2-oxoglutarate for other dicarboxylic acids such as malonate, succinate, maleate and oxaloacetate, although with lower affinity. Contributes to several metabolic processes, including the malate-aspartate shuttle, the oxoglutarate/isocitrate shuttle, in gluconeogenesis from lactate, and in nitrogen metabolism. Maintains mitochondrial fusion and fission events, and the organization and morphology of cristae. Involved in the regulation of apoptosis. Helps protect from cytotoxic-induced apoptosis by modulating glutathione levels in mitochondria. The chain is Mitochondrial 2-oxoglutarate/malate carrier protein (SLC25A11) from Bos taurus (Bovine).